An 867-amino-acid chain; its full sequence is Bifunctional diterpene synthase, chloroplastic (867 aa).

Residues 1–55 (MAKVLFSSFQQTGISGSLKSGQLSGVFINGTNLKSNAHAKRFRKNSTSSITIRCC) constitute a chloroplast transit peptide. A substrate-binding site is contributed by Lys-255. Mg(2+)-binding residues include Asp-389 and Asp-391. Positions 389 to 392 (DIDD) match the DXDD motif motif. Lys-474 contributes to the substrate binding site. Mg(2+)-binding residues include Asp-611, Asp-615, Asn-758, Thr-762, and Glu-766. Residues 611–615 (DDLMD) carry the DDXXD motif motif.

Belongs to the terpene synthase family. The cofactor is Mg(2+).

The protein localises to the plastid. The protein resides in the chloroplast. It carries out the reaction (+)-copalyl diphosphate = miltiradiene + diphosphate. The enzyme catalyses (2E,6E,10E)-geranylgeranyl diphosphate = (+)-copalyl diphosphate. The protein operates within secondary metabolite biosynthesis; terpenoid biosynthesis. In terms of biological role, bifunctional diterpene cyclase that catalyzes the successive two-step type-B (protonation-initiated cyclization) and type-A (ionization-initiated cyclization) reactions of geranylgeranyl diphosphate (GGDP) producing successively (+)-copalyl diphosphate and miltiradiene. The protein is Bifunctional diterpene synthase, chloroplastic (MDS) of Selaginella moellendorffii (Spikemoss).